The following is a 331-amino-acid chain: Histone-lysine N-methyltransferase, H3 lysine-9 specific dim-5 (331 aa).

Positions 77–159 constitute a Pre-SET domain; the sequence is VGCSCASDEE…DCPNRVVERG (83 aa). Positions 79, 81, 87, 92, 94, 141, 145, 147, and 151 each coordinate Zn(2+). The SET domain maps to 162-297; the sequence is VPLQIFRTKD…KGTELTFDYV (136 aa). Residues 172–174, D215, Y217, R251, and 254–255 each bind S-adenosyl-L-methionine; these read RGW and NH. C257, C319, C321, and C326 together coordinate Zn(2+). The region spanning 315–331 is the Post-SET domain; sequence EMTKCLCGTAKCRGYLW.

The protein belongs to the class V-like SAM-binding methyltransferase superfamily. Histone-lysine methyltransferase family. Suvar3-9 subfamily.

The protein resides in the nucleus. It localises to the chromosome. It carries out the reaction L-lysyl(9)-[histone H3] + 3 S-adenosyl-L-methionine = N(6),N(6),N(6)-trimethyl-L-lysyl(9)-[histone H3] + 3 S-adenosyl-L-homocysteine + 3 H(+). Histone methyltransferase that specifically trimethylates histone H3 to form H3K9me3. H3K9me3 marks chromatin regions for DNA methylation. Dim-5 recognizes Arg-8 to Gly-12 of the H3 tail with Thr-11 and Gly-12 being the most important specificity determinants, the recognition of whcih is important to distinguish H3K9 from H3K27 and H4K20. The polypeptide is Histone-lysine N-methyltransferase, H3 lysine-9 specific dim-5 (dim-5) (Neurospora crassa (strain ATCC 24698 / 74-OR23-1A / CBS 708.71 / DSM 1257 / FGSC 987)).